The sequence spans 124 residues: Small ribosomal subunit protein uS12 (124 aa).

A 3-methylthioaspartic acid modification is found at D89.

It belongs to the universal ribosomal protein uS12 family. Part of the 30S ribosomal subunit. Contacts proteins S8 and S17. May interact with IF1 in the 30S initiation complex.

Functionally, with S4 and S5 plays an important role in translational accuracy. Interacts with and stabilizes bases of the 16S rRNA that are involved in tRNA selection in the A site and with the mRNA backbone. Located at the interface of the 30S and 50S subunits, it traverses the body of the 30S subunit contacting proteins on the other side and probably holding the rRNA structure together. The combined cluster of proteins S8, S12 and S17 appears to hold together the shoulder and platform of the 30S subunit. The sequence is that of Small ribosomal subunit protein uS12 from Moorella thermoacetica (strain ATCC 39073 / JCM 9320).